We begin with the raw amino-acid sequence, 134 residues long: Agouti-related protein (134 aa).

An N-terminal signal peptide occupies residues 1–20; the sequence is MLTAVLLSCALLLAMPPLQG. The propeptide occupies 21-84; that stretch reads AQMGPAPLEG…VLDPEGRKPR (64 aa). 5 cysteine pairs are disulfide-bonded: Cys89-Cys104, Cys96-Cys110, Cys103-Cys121, Cys107-Cys131, and Cys112-Cys119. The 43-residue stretch at 89-131 folds into the Agouti domain; sequence CVRLHESCLGHQVPCCDPCATCYCRFFNAFCYCRKLGTTTNPC. Positions 113–115 are interaction with melanocortin receptors; that stretch reads RFF.

In terms of assembly, interacts with melanocortin receptors MC3R, MC4R and MC5R.

The protein localises to the secreted. It is found in the golgi apparatus lumen. In terms of biological role, plays a role in weight homeostasis. Involved in the control of feeding behavior through the central melanocortin system. Acts as alpha melanocyte-stimulating hormone antagonist by inhibiting cAMP production mediated by stimulation of melanocortin receptors within the hypothalamus and adrenal gland. Has very low activity with MC5R. Is an inverse agonist for MC3R and MC4R being able to suppress their constitutive activity. It promotes MC3R and MC4R endocytosis in an arrestin-dependent manner. The polypeptide is Agouti-related protein (AGRP) (Bos taurus (Bovine)).